Reading from the N-terminus, the 76-residue chain is Conotoxin Cal5a L2 (76 aa).

The N-terminal stretch at 1–22 (MRFYIGLMAALMLTSILRTDSA) is a signal peptide. Residues 23–42 (SVGQTGTKSELALIERVIRQ) constitute a propeptide that is removed on maturation. Proline 50 bears the 4-hydroxyproline mark. 3 positions are modified to 4-hydroxyproline; partial: proline 58, proline 62, and proline 64.

The protein belongs to the conotoxin T superfamily. Contains 2 disulfide bonds that can be either 'C1-C3, C2-C4' or 'C1-C4, C2-C3', since these disulfide connectivities have been observed for conotoxins with cysteine framework V (for examples, see AC P0DQQ7 and AC P81755). Expressed by the venom duct.

It is found in the secreted. Functionally, probable neurotoxin with unknown target. Possibly targets ion channels. This chain is Conotoxin Cal5a L2, found in Californiconus californicus (California cone).